Here is a 220-residue protein sequence, read N- to C-terminus: uncharacterized protein (220 aa).

Transmembrane regions (helical) follow at residues 61-81, 85-105, 115-135, and 150-170; these read LISV…SFFG, SVMF…YGAF, FVII…ILLL, and LPLE…SLLL.

It localises to the membrane. This is an uncharacterized protein from Caenorhabditis elegans.